We begin with the raw amino-acid sequence, 236 residues long: Activating transcription factor of chaperone (236 aa).

The tract at residues 117–185 is disordered; the sequence is HRASQLASPQ…KNAATRYRQK (69 aa). Over residues 120–137 the composition is skewed to low complexity; the sequence is SQLASPQHSSSSANASPR. Positions 162–175 are enriched in basic and acidic residues; that stretch reads RPVDDRRSRKKEQN. The bZIP domain occupies 165-228; that stretch reads DDRRSRKKEQ…RYLKALMRDL (64 aa). Positions 167 to 187 are basic motif; that stretch reads RRSRKKEQNKNAATRYRQKKK. Residues 193–228 form a leucine-zipper region; it reads LLKEEQTLRQRHTELGEKCSDLQREIRYLKALMRDL.

It belongs to the bZIP family. In terms of assembly, binds DNA as a dimer.

Its subcellular location is the nucleus. Its function is as follows. Transcriptional activator that acts in the unfolded protein response (UPR) pathway. Acts during endoplasmic reticulum (ER) stress by activating UPR target genes via direct binding to the UPR element (UPRE) (5'-GGAACTGGACAGCGTGTCGAAA-3'). Activates expression of ER chaperones ERP72 and PDI. In Bombyx mori (Silk moth), this protein is Activating transcription factor of chaperone.